Consider the following 307-residue polypeptide: Plasmodesmata-located protein 2 (307 aa).

A signal peptide spans 1-23; it reads MGLSISFLSIIMMMCLLFPDLNV. The Extracellular portion of the chain corresponds to 24–275; the sequence is VVKSATTEYT…STSTGATGKT (252 aa). Gnk2-homologous domains follow at residues 33 to 136 and 141 to 240; these read TTLI…VSGF and GMEM…YYPN. 6 cysteine pairs are disulfide-bonded: Cys-40-Cys-114, Cys-90-Cys-99, Cys-102-Cys-127, Cys-149-Cys-218, Cys-194-Cys-203, and Cys-206-Cys-231. Low complexity predominate over residues 246–268; sequence SSSSSSSSSSSSSGSSNSDPSTS. The interval 246–270 is disordered; it reads SSSSSSSSSSSSSGSSNSDPSTSTG. A helical membrane pass occupies residues 276-296; that stretch reads VAIIVGGAAGVGFLVICLLFA. The necessary and sufficient for plasmodesmal targeting stretch occupies residues 276-296; that stretch reads VAIIVGGAAGVGFLVICLLFA. At 297–307 the chain is on the cytoplasmic side; the sequence is KNLMRKKHDDY.

The protein belongs to the cysteine-rich repeat secretory protein family. Plasmodesmata-located proteins (PDLD) subfamily. In terms of assembly, (Microbial infection) Interacts with Grapevine fanleaf virus (GFLV) 2B-MP. Highly expressed in inflorescence shoot apex. Uniformly expressed within the inflorescence meristem with the exception of a boundary zone between floral primordia and the meristem where the expression is weaker (at protein level).

Its subcellular location is the cell membrane. The protein localises to the cell junction. It localises to the plasmodesma. In terms of biological role, modulates cell-to-cell trafficking. The protein is Plasmodesmata-located protein 2 of Arabidopsis thaliana (Mouse-ear cress).